Consider the following 315-residue polypeptide: Tyrosine recombinase XerC (315 aa).

In terms of domain architecture, Core-binding (CB) spans 13 to 104 (ADLAAAREEW…GVRSLLRHLE (92 aa)). Residues 125–309 (SLPKPLTADD…DTQRLLEVYD (185 aa)) form the Tyr recombinase domain. Residues arginine 168, lysine 193, histidine 261, arginine 264, and histidine 287 contribute to the active site. Residue tyrosine 296 is the O-(3'-phospho-DNA)-tyrosine intermediate of the active site.

The protein belongs to the 'phage' integrase family. XerC subfamily. As to quaternary structure, forms a cyclic heterotetrameric complex composed of two molecules of XerC and two molecules of XerD.

The protein resides in the cytoplasm. Its function is as follows. Site-specific tyrosine recombinase, which acts by catalyzing the cutting and rejoining of the recombining DNA molecules. The XerC-XerD complex is essential to convert dimers of the bacterial chromosome into monomers to permit their segregation at cell division. It also contributes to the segregational stability of plasmids. This is Tyrosine recombinase XerC from Brucella suis biovar 1 (strain 1330).